A 437-amino-acid polypeptide reads, in one-letter code: Elongation factor 1-gamma (437 aa).

A2 bears the N-acetylalanine mark. Positions 2–87 (AAGTLYTYPE…YVSNEELRGS (86 aa)) constitute a GST N-terminal domain. Residues 88-216 (TPEAAAQVVQ…VKLCEKMAQF (129 aa)) form the GST C-terminal domain. 2 positions are modified to N6-acetyllysine: K147 and K212. The span at 221 to 254 (FAETQPKKDTPRKEKGSREEKQKPQAERKEEKKA) shows a compositional bias: basic and acidic residues. The tract at residues 221–268 (FAETQPKKDTPRKEKGSREEKQKPQAERKEEKKAAAPAPEEEMDECEQ) is disordered. Residue K253 forms a Glycyl lysine isopeptide (Lys-Gly) (interchain with G-Cter in SUMO1) linkage. The region spanning 276 to 437 (AKDPFAHLPK…KAFNQGKIFK (162 aa)) is the EF-1-gamma C-terminal domain. K285 is covalently cross-linked (Glycyl lysine isopeptide (Lys-Gly) (interchain with G-Cter in SUMO2)). Residue K401 is modified to N6-acetyllysine. K434 carries the N6-acetyllysine; alternate modification. Position 434 is an N6-malonyllysine; alternate (K434).

EF-1 is composed of four subunits: alpha, beta, delta, and gamma.

Functionally, probably plays a role in anchoring the complex to other cellular components. This Macaca fascicularis (Crab-eating macaque) protein is Elongation factor 1-gamma (EEF1G).